The following is a 59-amino-acid chain: UPF0181 protein YoaH (59 aa).

The protein belongs to the UPF0181 family.

The sequence is that of UPF0181 protein YoaH from Shigella flexneri serotype 5b (strain 8401).